Consider the following 142-residue polypeptide: Large ribosomal subunit protein uL22c (142 aa).

Belongs to the universal ribosomal protein uL22 family. In terms of assembly, part of the 50S ribosomal subunit.

It is found in the plastid. Its subcellular location is the chloroplast. Functionally, this protein binds specifically to 23S rRNA. Its function is as follows. The globular domain of the protein is located near the polypeptide exit tunnel on the outside of the subunit, while an extended beta-hairpin is found that lines the wall of the exit tunnel in the center of the 70S ribosome. The sequence is that of Large ribosomal subunit protein uL22c (rpl22) from Oenothera parviflora (Small-flowered evening primrose).